Consider the following 790-residue polypeptide: Penicillin-binding protein 1A (790 aa).

Topologically, residues 1–20 (MANVRKRRKKKNEHKALRLT) are cytoplasmic. Residues 21–41 (FITLLMVFLFSCVAAAGVGLA) form a helical; Signal-anchor for type II membrane protein membrane-spanning segment. Residues 42-790 (MIKAAPPLDV…RKRKMIKPQI (749 aa)) lie on the Extracellular side of the membrane. Residues 61–230 (SVIYDDKNKL…PQSPSTFYNA (170 aa)) are transglycosylase. The active-site Proton donor; for transglycosylase activity is the glutamate 100. Residues 363–656 (ASVSIVDYKT…AALIWKLIMG (294 aa)) form a transpeptidase region. Serine 402 (acyl-ester intermediate; for transpeptidase activity) is an active-site residue. Residues 720–790 (NKDKDDDDDD…RKRKMIKPQI (71 aa)) are disordered. The segment covering 724-740 (DDDDDDKDKDKEDEEEN) has biased composition (acidic residues). The span at 741–779 (KDEKNEDKKEAKDNTKNKDKDKKKDNDRKIDMDKKPDSS) shows a compositional bias: basic and acidic residues. Basic residues predominate over residues 780–790 (KRKRKMIKPQI).

It in the N-terminal section; belongs to the glycosyltransferase 51 family. In the C-terminal section; belongs to the transpeptidase family.

The protein localises to the cell membrane. The catalysed reaction is [GlcNAc-(1-&gt;4)-Mur2Ac(oyl-L-Ala-gamma-D-Glu-L-Lys-D-Ala-D-Ala)](n)-di-trans,octa-cis-undecaprenyl diphosphate + beta-D-GlcNAc-(1-&gt;4)-Mur2Ac(oyl-L-Ala-gamma-D-Glu-L-Lys-D-Ala-D-Ala)-di-trans,octa-cis-undecaprenyl diphosphate = [GlcNAc-(1-&gt;4)-Mur2Ac(oyl-L-Ala-gamma-D-Glu-L-Lys-D-Ala-D-Ala)](n+1)-di-trans,octa-cis-undecaprenyl diphosphate + di-trans,octa-cis-undecaprenyl diphosphate + H(+). It catalyses the reaction Preferential cleavage: (Ac)2-L-Lys-D-Ala-|-D-Ala. Also transpeptidation of peptidyl-alanyl moieties that are N-acyl substituents of D-alanine.. The protein operates within cell wall biogenesis; peptidoglycan biosynthesis. Cell wall formation. Synthesis of cross-linked peptidoglycan from the lipid intermediates. The enzyme has a penicillin-insensitive transglycosylase N-terminal domain (formation of linear glycan strands) and a penicillin-sensitive transpeptidase C-terminal domain (cross-linking of the peptide subunits). The protein is Penicillin-binding protein 1A (pbpA) of Clostridium tetani (strain Massachusetts / E88).